A 518-amino-acid polypeptide reads, in one-letter code: MLLTILKSLLVIFVTTILRVLYDTISCYWLTPRRIKKIMEQQGVTGPKPRPLTGNILEISAMVSQSASKDCDSIHHDIVGRLLPHYVAWSKQYGKRFIVWNGTDPRLCLTETELIKELLMKHNGVSGRSWLQQQGTKNFIGRGLLMANGQDWHHQRHLAAPAFTGERLKGYARHMVECTSKLVERLRKEVGEGANEVEIGEEMHKLTADIISRTKFGSSFEKGKELFNHLTVLQRRCAQATRHLCFPGSRFLPSKYNREIKSLKKEVERLLIEIIQSRRDCAEMGRSSTHGDDLLGLLLNEMDIDKNNNNNNNNLQLIMDECKTFFFAGHETTALLLTWTTMLLADNPTWQEKVREEVREVFGRNGLPSVDQLSKLTSLSKVINESLRLYPPATLLPRMAFEDLKLGDLTIPKGLSIWIPVLAIHHSEELWGKDANQFNPERFGGRPFASGRHFIPFAAGPRNCIGQQFALMEAKIILATLISKFNFTISKNYRHAPIVVLTIKPKYGVQVILKPLVS.

The helical transmembrane segment at 1-21 threads the bilayer; sequence MLLTILKSLLVIFVTTILRVL. Heme is bound at residue Cys-464.

This sequence belongs to the cytochrome P450 family. Heme is required as a cofactor. Expressed in roots and flowers.

It localises to the membrane. It carries out the reaction N(6)-(dimethylallyl)adenosine 5'-phosphate + NADPH + O2 + H(+) = 9-ribosyl-trans-zeatin 5'-phosphate + NADP(+) + H2O. It catalyses the reaction N(6)-(dimethylallyl)adenosine 5'-diphosphate + NADPH + O2 + H(+) = 9-ribosyl-trans-zeatin 5'-diphosphate + NADP(+) + H2O. The enzyme catalyses N(6)-(dimethylallyl)adenosine 5'-triphosphate + NADPH + O2 + H(+) = 9-ribosyl-trans-zeatin 5'-triphosphate + NADP(+) + H2O. In terms of biological role, cytokinin hydroxylase that catalyzes the biosynthesis of trans-zeatin via the isopentenyladenine riboside 5'-monophosphate (iPRMP)-dependent pathway. Can use isopentenyladenosine-5'-monophosphate, isopentenyladenosine-5'-diphosphate and isopentenyladenosine-5'-triphosphate as substrate. The chain is Cytokinin hydroxylase (CYP735A1) from Arabidopsis thaliana (Mouse-ear cress).